Consider the following 457-residue polypeptide: Argininosuccinate lyase (457 aa).

The protein belongs to the lyase 1 family. Argininosuccinate lyase subfamily.

Its subcellular location is the cytoplasm. It carries out the reaction 2-(N(omega)-L-arginino)succinate = fumarate + L-arginine. It participates in amino-acid biosynthesis; L-arginine biosynthesis; L-arginine from L-ornithine and carbamoyl phosphate: step 3/3. The chain is Argininosuccinate lyase from Escherichia coli O157:H7 (strain EC4115 / EHEC).